Reading from the N-terminus, the 315-residue chain is Putative protein phosphatase 2C 24 (315 aa).

The PPM-type phosphatase domain maps to 71–314 (ALRMEAASCF…DDITVVVAYI (244 aa)). Asp102, Gly103, Asp238, and Asp305 together coordinate Mn(2+).

Belongs to the PP2C family. The cofactor is Mg(2+). Mn(2+) is required as a cofactor.

It catalyses the reaction O-phospho-L-seryl-[protein] + H2O = L-seryl-[protein] + phosphate. It carries out the reaction O-phospho-L-threonyl-[protein] + H2O = L-threonyl-[protein] + phosphate. The sequence is that of Putative protein phosphatase 2C 24 from Oryza sativa subsp. japonica (Rice).